Reading from the N-terminus, the 347-residue chain is Holliday junction branch migration complex subunit RuvB (347 aa).

A large ATPase domain (RuvB-L) region spans residues 4 to 186 (INEYGSERIV…FGMIFEMNFY (183 aa)). ATP contacts are provided by residues Leu25, Arg26, Gly67, Lys70, Thr71, Thr72, 133-135 (EDF), Arg176, Tyr186, and Arg223. Thr71 lines the Mg(2+) pocket. Residues 187–257 (TQEELKMIIT…IVEEVMRLLG (71 aa)) are small ATPAse domain (RuvB-S). The interval 260–347 (EFGLDEMDRK…GLFDGFGNIE (88 aa)) is head domain (RuvB-H). DNA-binding residues include Arg315 and Arg320.

It belongs to the RuvB family. Homohexamer. Forms an RuvA(8)-RuvB(12)-Holliday junction (HJ) complex. HJ DNA is sandwiched between 2 RuvA tetramers; dsDNA enters through RuvA and exits via RuvB. An RuvB hexamer assembles on each DNA strand where it exits the tetramer. Each RuvB hexamer is contacted by two RuvA subunits (via domain III) on 2 adjacent RuvB subunits; this complex drives branch migration. In the full resolvosome a probable DNA-RuvA(4)-RuvB(12)-RuvC(2) complex forms which resolves the HJ.

The protein localises to the cytoplasm. It catalyses the reaction ATP + H2O = ADP + phosphate + H(+). The RuvA-RuvB-RuvC complex processes Holliday junction (HJ) DNA during genetic recombination and DNA repair, while the RuvA-RuvB complex plays an important role in the rescue of blocked DNA replication forks via replication fork reversal (RFR). RuvA specifically binds to HJ cruciform DNA, conferring on it an open structure. The RuvB hexamer acts as an ATP-dependent pump, pulling dsDNA into and through the RuvAB complex. RuvB forms 2 homohexamers on either side of HJ DNA bound by 1 or 2 RuvA tetramers; 4 subunits per hexamer contact DNA at a time. Coordinated motions by a converter formed by DNA-disengaged RuvB subunits stimulates ATP hydrolysis and nucleotide exchange. Immobilization of the converter enables RuvB to convert the ATP-contained energy into a lever motion, pulling 2 nucleotides of DNA out of the RuvA tetramer per ATP hydrolyzed, thus driving DNA branch migration. The RuvB motors rotate together with the DNA substrate, which together with the progressing nucleotide cycle form the mechanistic basis for DNA recombination by continuous HJ branch migration. Branch migration allows RuvC to scan DNA until it finds its consensus sequence, where it cleaves and resolves cruciform DNA. The chain is Holliday junction branch migration complex subunit RuvB from Fervidobacterium nodosum (strain ATCC 35602 / DSM 5306 / Rt17-B1).